The primary structure comprises 572 residues: Proline--tRNA ligase (572 aa).

The protein belongs to the class-II aminoacyl-tRNA synthetase family. ProS type 1 subfamily. Homodimer.

It is found in the cytoplasm. The enzyme catalyses tRNA(Pro) + L-proline + ATP = L-prolyl-tRNA(Pro) + AMP + diphosphate. In terms of biological role, catalyzes the attachment of proline to tRNA(Pro) in a two-step reaction: proline is first activated by ATP to form Pro-AMP and then transferred to the acceptor end of tRNA(Pro). As ProRS can inadvertently accommodate and process non-cognate amino acids such as alanine and cysteine, to avoid such errors it has two additional distinct editing activities against alanine. One activity is designated as 'pretransfer' editing and involves the tRNA(Pro)-independent hydrolysis of activated Ala-AMP. The other activity is designated 'posttransfer' editing and involves deacylation of mischarged Ala-tRNA(Pro). The misacylated Cys-tRNA(Pro) is not edited by ProRS. This Enterobacter sp. (strain 638) protein is Proline--tRNA ligase.